Here is a 416-residue protein sequence, read N- to C-terminus: Tyrosine--tRNA ligase (416 aa).

Tyr-40 provides a ligand contact to L-tyrosine. The 'HIGH' region motif lies at 45 to 54 (ATAASLHVGH). 2 residues coordinate L-tyrosine: Tyr-177 and Gln-181. The 'KMSKS' region motif lies at 237–241 (KMGKS). Position 240 (Lys-240) interacts with ATP. Residues 351–416 (LSVAHFLVAA…RKKHKLVRLS (66 aa)) enclose the S4 RNA-binding domain.

The protein belongs to the class-I aminoacyl-tRNA synthetase family. TyrS type 1 subfamily. In terms of assembly, homodimer.

It is found in the cytoplasm. The catalysed reaction is tRNA(Tyr) + L-tyrosine + ATP = L-tyrosyl-tRNA(Tyr) + AMP + diphosphate + H(+). Functionally, catalyzes the attachment of tyrosine to tRNA(Tyr) in a two-step reaction: tyrosine is first activated by ATP to form Tyr-AMP and then transferred to the acceptor end of tRNA(Tyr). This chain is Tyrosine--tRNA ligase, found in Cereibacter sphaeroides (strain ATCC 17029 / ATH 2.4.9) (Rhodobacter sphaeroides).